We begin with the raw amino-acid sequence, 169 residues long: Disulfide bond formation protein B (169 aa).

Residues 1 to 14 are Cytoplasmic-facing; sequence MNNLTLSLHRERRL. Residues 15–31 form a helical membrane-spanning segment; it reads LVLLGLVCLALLAGALY. At 32–49 the chain is on the periplasmic side; sequence LQYVKNEDPCPLCIIQRY. Residues Cys41 and Cys44 are joined by a disulfide bond. The chain crosses the membrane as a helical span at residues 50–64; it reads FFVLIAVFAFIGAGM. The Cytoplasmic segment spans residues 65 to 71; the sequence is ASGAGIA. The chain crosses the membrane as a helical span at residues 72 to 89; that stretch reads VIEALIVLSAAAGVGTAA. At 90–144 the chain is on the periplasmic side; sequence RHLYVQLNPGFSCGFDALQPVVDSLPPAHWLPGVFKVAGLCETVYPPIFGILLPG. Cys102 and Cys130 are oxidised to a cystine. The helical transmembrane segment at 145-163 threads the bilayer; that stretch reads WALIAFALIVVPVAASLLR. The Cytoplasmic segment spans residues 164-169; that stretch reads HRGRLR.

Belongs to the DsbB family.

It is found in the cell inner membrane. In terms of biological role, required for disulfide bond formation in some periplasmic proteins. Acts by oxidizing the DsbA protein. The polypeptide is Disulfide bond formation protein B (Burkholderia thailandensis (strain ATCC 700388 / DSM 13276 / CCUG 48851 / CIP 106301 / E264)).